We begin with the raw amino-acid sequence, 421 residues long: Type II methyltransferase M.TaqI (421 aa).

Over residues 1 to 18 the composition is skewed to low complexity; sequence MGLPPLLSLPSNSAPRSL. The segment at 1–20 is disordered; sequence MGLPPLLSLPSNSAPRSLGR. S-adenosyl-L-methionine contacts are provided by residues threonine 23, 45-48, glutamate 71, aspartate 89, and proline 107; that span reads EPAC.

It belongs to the N(4)/N(6)-methyltransferase family.

The catalysed reaction is a 2'-deoxyadenosine in DNA + S-adenosyl-L-methionine = an N(6)-methyl-2'-deoxyadenosine in DNA + S-adenosyl-L-homocysteine + H(+). In terms of biological role, a gamma subtype methylase that recognizes the double-stranded sequence 5'-TCGA-3', methylates A-4 on both strands and protects the DNA from cleavage by the TaqI endonuclease. The sequence is that of Type II methyltransferase M.TaqI (taqIM) from Thermus aquaticus.